The following is a 341-amino-acid chain: MLDSPHNLYIKKFMLCYIIYYFLICHLYNHIFNLREIMLCSCGNEAFYYQKYSNRHLCKECFKKDIERRAKKVLGKDIIRNNVKIGIGISGGKDSLVMAYILKELFKHIPNAKLICFFVDEGIKGFRNIAEKYVKEFCKEYNLDLKIIKFEDEIGYTLDEIVKNDYLSKLNIGKPCSFCGVVRRYLLNKHALKEGCDYLAIGHNLDDFCQTILMNYVEGNIKNIIQFGKEFEGGGFVKRIKPLKLIPEEEVKLYAEINNIKYQREPCPYSSLSYRHRMKKVIEILEEEKPGVKFSILRGYEKLLKYLNVKEEIRRCEICGFPCSGNICKVCSWLIKLKEIK.

Zn(2+) is bound by residues Cys40, Cys42, Cys58, and Cys61. ATP is bound at residue Gly88. [4Fe-4S] cluster is bound by residues Cys176 and Cys179. ATP is bound by residues Arg183 and Gly202. Residue Cys267 coordinates [4Fe-4S] cluster. 4 residues coordinate Zn(2+): Cys316, Cys319, Cys328, and Cys331.

Belongs to the TtcA family. [4Fe-4S] cluster serves as cofactor. The cofactor is Mg(2+).

This Methanocaldococcus jannaschii (strain ATCC 43067 / DSM 2661 / JAL-1 / JCM 10045 / NBRC 100440) (Methanococcus jannaschii) protein is Probable sulfurtransferase.